We begin with the raw amino-acid sequence, 646 residues long: Threonine--tRNA ligase (646 aa).

A TGS domain is found at 1-61 (MIKITFPDGN…NEDSNFEIVT (61 aa)). Residues 242 to 540 (DHRKLGRELD…LIEVYKGAFP (299 aa)) are catalytic. Zn(2+)-binding residues include Cys-336, His-387, and His-517.

It belongs to the class-II aminoacyl-tRNA synthetase family. As to quaternary structure, homodimer. Zn(2+) is required as a cofactor.

Its subcellular location is the cytoplasm. It catalyses the reaction tRNA(Thr) + L-threonine + ATP = L-threonyl-tRNA(Thr) + AMP + diphosphate + H(+). In terms of biological role, catalyzes the attachment of threonine to tRNA(Thr) in a two-step reaction: L-threonine is first activated by ATP to form Thr-AMP and then transferred to the acceptor end of tRNA(Thr). Also edits incorrectly charged L-seryl-tRNA(Thr). The polypeptide is Threonine--tRNA ligase (Lactococcus lactis subsp. lactis (strain IL1403) (Streptococcus lactis)).